We begin with the raw amino-acid sequence, 1229 residues long: Receptor-type adenylate cyclase GRESAG 4.3 (1229 aa).

At 1–24 the chain is on the cytoplasmic side; sequence MIARVCRLTKHSKPPHLPITLTTP. Residues 25–45 traverse the membrane as a helical segment; it reads TLFLVVLVLLQLHPICVLVNV. Topologically, residues 46–845 are extracellular; that stretch reads DDGGGVTVKA…PNGNALTPAQ (800 aa). Asn77, Asn84, Asn626, Asn693, and Asn768 each carry an N-linked (GlcNAc...) asparagine glycan. The chain crosses the membrane as a helical span at residues 846 to 866; it reads LAGVVGGSLFVVALAICLSVL. Topologically, residues 867-1229 are cytoplasmic; the sequence is ACFTLRGTRD…SNDLSDMIRV (363 aa). Positions 889–1043 constitute a Guanylate cyclase domain; sequence TLIFTDIESS…RTSNMAARTE (155 aa). Residues Asp894 and Asp937 each contribute to the Mg(2+) site.

Belongs to the adenylyl cyclase class-3 family. Mg(2+) serves as cofactor.

It is found in the membrane. The enzyme catalyses ATP = 3',5'-cyclic AMP + diphosphate. Its function is as follows. Could act as a receptor for an unknown ligand. The polypeptide is Receptor-type adenylate cyclase GRESAG 4.3 (GRESAG 4.3) (Trypanosoma brucei brucei).